A 261-amino-acid polypeptide reads, in one-letter code: Thiazole synthase (261 aa).

Residue Lys102 is the Schiff-base intermediate with DXP of the active site. Residues Gly163, Ala189–Gly190, and Asn211–Thr212 each bind 1-deoxy-D-xylulose 5-phosphate.

It belongs to the ThiG family. As to quaternary structure, homotetramer. Forms heterodimers with either ThiH or ThiS.

Its subcellular location is the cytoplasm. It carries out the reaction [ThiS sulfur-carrier protein]-C-terminal-Gly-aminoethanethioate + 2-iminoacetate + 1-deoxy-D-xylulose 5-phosphate = [ThiS sulfur-carrier protein]-C-terminal Gly-Gly + 2-[(2R,5Z)-2-carboxy-4-methylthiazol-5(2H)-ylidene]ethyl phosphate + 2 H2O + H(+). It participates in cofactor biosynthesis; thiamine diphosphate biosynthesis. In terms of biological role, catalyzes the rearrangement of 1-deoxy-D-xylulose 5-phosphate (DXP) to produce the thiazole phosphate moiety of thiamine. Sulfur is provided by the thiocarboxylate moiety of the carrier protein ThiS. In vitro, sulfur can be provided by H(2)S. In Acinetobacter baumannii (strain AB307-0294), this protein is Thiazole synthase.